Consider the following 162-residue polypeptide: UPF0178 protein RHOS4_24670 (162 aa).

Belongs to the UPF0178 family.

The protein is UPF0178 protein RHOS4_24670 of Cereibacter sphaeroides (strain ATCC 17023 / DSM 158 / JCM 6121 / CCUG 31486 / LMG 2827 / NBRC 12203 / NCIMB 8253 / ATH 2.4.1.) (Rhodobacter sphaeroides).